Consider the following 92-residue polypeptide: uncharacterized protein (92 aa).

An HMA domain is found at 24-89 (KQIVLKVKEM…AIHKLKYTAE (66 aa)). Residues Cys-35 and Cys-38 each contribute to the a metal cation site.

This is an uncharacterized protein from Haemophilus influenzae (strain ATCC 51907 / DSM 11121 / KW20 / Rd).